Here is a 191-residue protein sequence, read N- to C-terminus: MEASFIRSLPSAGNFANLLPTGTALIFETLLPSFSNGGECNNKPVNKLLTITLISFCAAACFFSSFTDSYVGQDGRIYYGIATSNGLHILNDYPDEGYDPESGLTADKRERYKLSFVDFVHAFVSVIVFLALAVESSDFRRCLLPEDDENSWGGHFVLMIKYFAVMVLTMASFFFAIFPSKRRGIGISDIR.

A run of 4 helical transmembrane segments spans residues 15–35 (FANL…PSFS), 48–68 (LLTI…SFTD), 114–134 (LSFV…ALAV), and 158–178 (LMIK…FAIF).

This sequence belongs to the plant DMP1 protein family. In terms of tissue distribution, restricted to flowers.

Its subcellular location is the membrane. Functionally, involved in membrane remodeling. This is Protein DMP10 from Arabidopsis thaliana (Mouse-ear cress).